We begin with the raw amino-acid sequence, 382 residues long: MSRFLRPAFRLATTATRASTIRPTPSSLITKAAAVPTTRLLQKRSYAAEATGVKEYTVREALNEALAEELESNPKVFILGEEVAQYNGAYKVTKGLLDRFGEKRVIDTPITEMGFAGLAVGAALAGLQPVCEFMTFNFAMQAIDHIVNSAAKTLYMSGGIQPCNITFRGPNGFAAGVAAQHSQDYAAWYGSIPGLKVVSPWSAEDAKGLLKAAIRDPNPVVVLENELMYGVSFPMSEAAQKDDFVLPFGKAKIERAGKDLTIVSLSRCVGQSLVAAENLKKKYGIEAEVINLRSIKPLDVEAIVKSVKKTHRLLAVESGFPAFGVGAEILALTMEYAFDYLDTPAQRITGADVPTPYAQKLEEMSFPTEQLIEDYAAKMLRV.

Residues 1 to 46 (MSRFLRPAFRLATTATRASTIRPTPSSLITKAAAVPTTRLLQKRSY) constitute a mitochondrion transit peptide. A thiamine diphosphate-binding site is contributed by Glu112. K(+) is bound by residues Ile165, Ala213, Ile214, Asp216, and Asn218.

As to quaternary structure, eukaryotic pyruvate dehydrogenase (PDH) complexes are organized as a core consisting of the oligomeric dihydrolipoamide acetyl-transferase (E2), around which are arranged multiple copies of pyruvate dehydrogenase (E1), dihydrolipoamide dehydrogenase (E3) and protein X (E3BP) bound by non-covalent bonds. The Chaetomium thermophilum PDH complex contains 60 E2 units, 12 E3BP units, about 20 E1 units, and 12 or more E3 units. The units are organized in 1 E2 60-mer, 4 E3BP trimers, about 20 E1 tetramers, and a maximum of 12 E3 dimers. Pyruvate dehydrogenase (E1) is active as a tetramer of 2 alpha and 2 beta subunits. The E3BP trimers are bound inside the icosahedral core with tetrahedral symmetry. Requires thiamine diphosphate as cofactor.

The protein resides in the mitochondrion. It carries out the reaction N(6)-[(R)-lipoyl]-L-lysyl-[protein] + pyruvate + H(+) = N(6)-[(R)-S(8)-acetyldihydrolipoyl]-L-lysyl-[protein] + CO2. In terms of biological role, the 10-megadalton pyruvate dehydrogenase complex contains multiple copies of three enzymatic components: pyruvate dehydrogenase (E1), dihydrolipoamide acetyltransferase (E2) and lipoamide dehydrogenase (E3) and catalyzes the overall oxidative decarboxylation of pyruvate to form acetyl-CoA and CO(2). Within the complex, pyruvate and thiamine pyrophosphate (TPP or vitamin B1) are bound by pyruvate dehydrogenase E1 subunits alpha and beta and pyruvate is decarboxylated leading to the 2-carbon hydrohyethyl bound to TPP. The E2 component contains covalently-bound lipoyl cofactors and transfers the hydroxyethyl group from TPP to an oxidized form of covalently bound lipoamide, and the resulting acetyl group is then transferred to free coenzyme A to form acetyl-CoA and reduced dihydrolipoamide-E2. Finally, the flavoprotein dihydrolipoamide dehydrogenase (E3) re-oxidizes the lipoyl group of dihydrolipoamide-E2 to form lipoamide-E2 and NADH. A fourth subunit, E3BP, is responsible for tethering E3 in proximity to the core, forming the entire metabolon. The protein is Pyruvate dehydrogenase E1 component subunit beta, mitochondrial of Chaetomium thermophilum (strain DSM 1495 / CBS 144.50 / IMI 039719) (Thermochaetoides thermophila).